We begin with the raw amino-acid sequence, 159 residues long: 2-C-methyl-D-erythritol 2,4-cyclodiphosphate synthase (159 aa).

Residues D8 and H10 each coordinate a divalent metal cation. 4-CDP-2-C-methyl-D-erythritol 2-phosphate contacts are provided by residues 8–10 and 34–35; these read DVH and HS. Residue H42 participates in a divalent metal cation binding. Residues 56-58, 132-135, and R142 each bind 4-CDP-2-C-methyl-D-erythritol 2-phosphate; these read DIG and TTTE.

The protein belongs to the IspF family. As to quaternary structure, homotrimer. A divalent metal cation serves as cofactor.

It catalyses the reaction 4-CDP-2-C-methyl-D-erythritol 2-phosphate = 2-C-methyl-D-erythritol 2,4-cyclic diphosphate + CMP. The protein operates within isoprenoid biosynthesis; isopentenyl diphosphate biosynthesis via DXP pathway; isopentenyl diphosphate from 1-deoxy-D-xylulose 5-phosphate: step 4/6. Its function is as follows. Involved in the biosynthesis of isopentenyl diphosphate (IPP) and dimethylallyl diphosphate (DMAPP), two major building blocks of isoprenoid compounds. Catalyzes the conversion of 4-diphosphocytidyl-2-C-methyl-D-erythritol 2-phosphate (CDP-ME2P) to 2-C-methyl-D-erythritol 2,4-cyclodiphosphate (ME-CPP) with a corresponding release of cytidine 5-monophosphate (CMP). The chain is 2-C-methyl-D-erythritol 2,4-cyclodiphosphate synthase from Chlorobium phaeobacteroides (strain BS1).